A 273-amino-acid chain; its full sequence is Outer surface protein A (273 aa).

An N-terminal signal peptide occupies residues 1 to 16 (MKKYLLGIGLILALIA). Residue Cys17 is the site of N-palmitoyl cysteine attachment. The S-diacylglycerol cysteine moiety is linked to residue Cys17.

This sequence belongs to the OspA lipoprotein family.

The protein resides in the cell outer membrane. Its subcellular location is the cell surface. The protein is Outer surface protein A of Borreliella burgdorferi (strain N40) (Borrelia burgdorferi).